The primary structure comprises 276 residues: B3 domain-containing protein REM22 (276 aa).

The TF-B3 DNA-binding region spans 11 to 115 (SETMSIQDTV…VFHFCVYEYG (105 aa)). Residues 141–164 (GNEESTKGLEESPRRGGTSRRRAK) form a disordered region. A compositionally biased stretch (basic and acidic residues) spans 144–154 (ESTKGLEESPR).

The protein resides in the nucleus. This chain is B3 domain-containing protein REM22 (REM22), found in Arabidopsis thaliana (Mouse-ear cress).